Consider the following 611-residue polypeptide: Leukotriene A-4 hydrolase (611 aa).

Position 73 is an N6-acetyllysine (Lys-73). A peptide-binding positions include 135–137 (QCQ) and 267–272 (PYGGME). Zn(2+) is bound at residue His-296. Residue Glu-297 is the Proton acceptor of the active site. Positions 300 and 319 each coordinate Zn(2+). Lys-337 is modified (N6-acetyllysine). The active-site Proton donor is the Tyr-384. Residue Lys-414 is modified to N6-acetyllysine. Ser-416 carries the phosphoserine modification. An a peptide-binding site is contributed by 564-566 (RMK). Lys-573 carries the post-translational modification N6-acetyllysine.

This sequence belongs to the peptidase M1 family. As to quaternary structure, monomer. Requires Zn(2+) as cofactor. Post-translationally, phosphorylation at Ser-416 inhibits leukotriene-A4 hydrolase activity. Isoform 1 and isoform 2 are expressed in monocytes, lymphocytes, neutrophils, reticulocytes, platelets and fibroblasts.

It localises to the cytoplasm. The catalysed reaction is leukotriene A4 + H2O = leukotriene B4. It catalyses the reaction (5S,6S)-epoxy-(18R)-hydroxy-(7E,9E,11Z,14Z,16E)-eicosapentaenoate + H2O = resolvin E1. The enzyme catalyses (5S,6S)-epoxy-(18S)-hydroxy-(7E,9E,11Z,14Z,16E)-eicosapentaenoate + H2O = 18S-resolvin E1. It carries out the reaction Release of the N-terminal residue from a tripeptide.. Its pathway is lipid metabolism; leukotriene B4 biosynthesis. Inhibited by bestatin. The epoxide hydrolase activity is restrained by suicide inactivation that involves binding of LTA4 to Tyr-379. 4-(4-benzylphenyl)thiazol-2-amine (ARM1) selectively inhibits the epoxide hydrolase activity. In terms of biological role, bifunctional zinc metalloenzyme that comprises both epoxide hydrolase (EH) and aminopeptidase activities. Acts as an epoxide hydrolase to catalyze the conversion of LTA4 to the pro-inflammatory mediator leukotriene B4 (LTB4). Also has aminopeptidase activity, with high affinity for N-terminal arginines of various synthetic tripeptides. In addition to its pro-inflammatory EH activity, may also counteract inflammation by its aminopeptidase activity, which inactivates by cleavage another neutrophil attractant, the tripeptide Pro-Gly-Pro (PGP), a bioactive fragment of collagen generated by the action of matrix metalloproteinase-9 (MMP9) and prolylendopeptidase (PREPL). Involved also in the biosynthesis of resolvin E1 and 18S-resolvin E1 from eicosapentaenoic acid, two lipid mediators that show potent anti-inflammatory and pro-resolving actions. This chain is Leukotriene A-4 hydrolase (LTA4H), found in Homo sapiens (Human).